A 205-amino-acid polypeptide reads, in one-letter code: tRNA (pseudouridine(54)-N(1))-methyltransferase (205 aa).

S-adenosyl-L-methionine contacts are provided by residues L136, G156, 179–184, and C189; that span reads LSPLEL.

This sequence belongs to the methyltransferase superfamily. TrmY family. As to quaternary structure, homodimer.

Its subcellular location is the cytoplasm. It carries out the reaction pseudouridine(54) in tRNA + S-adenosyl-L-methionine = N(1)-methylpseudouridine(54) in tRNA + S-adenosyl-L-homocysteine + H(+). Its function is as follows. Specifically catalyzes the N1-methylation of pseudouridine at position 54 (Psi54) in tRNAs. The chain is tRNA (pseudouridine(54)-N(1))-methyltransferase from Methanocaldococcus jannaschii (strain ATCC 43067 / DSM 2661 / JAL-1 / JCM 10045 / NBRC 100440) (Methanococcus jannaschii).